The chain runs to 497 residues: Acetyltransferase FGR3 (497 aa).

Ca(2+) contacts are provided by Asp-221 and Ile-224. CoA contacts are provided by Lys-255 and Asp-303. Asp-386 lines the Ca(2+) pocket. Position 396 (Thr-396) interacts with CoA. Asp-462 lines the Ca(2+) pocket. Positions 477 to 497 (DASEAKKANGTNGTNGVNGSS) are disordered. Residues 485-497 (NGTNGTNGVNGSS) are compositionally biased toward low complexity.

It belongs to the trichothecene 3-O-acetyltransferase family.

Its pathway is secondary metabolite biosynthesis. Functionally, acetyltransferase; part of the gene cluster that mediates the biosynthesis of the tetraketides fugralins such as linear fugralin A and cyclic fugralin B, volatile compounds that play a role in the asexual reproductive cycle but are not involved in pathogenicity. One of the key features of fugralins is the presence of a double methyl group, which is only rarely encountered in fungal secondary metabolites. As the fugralins cluster does not contain an independent methyltransferase, the PKS FGR1 is probably responsible for adding two methyl groups to the same carbon atom. Fugralin B is similar to fugralin A except for a cyclization between the carboxylic acid C-8 and the alcohol on C-4 resulting in a six membered lactone ring, probably catalyzed by the cyclase FGR4. The exact role of the individual cluster genes remains unknown and further work is needed to unravel the biosynthetic pathway. In Gibberella zeae (strain ATCC MYA-4620 / CBS 123657 / FGSC 9075 / NRRL 31084 / PH-1) (Wheat head blight fungus), this protein is Acetyltransferase FGR3.